The sequence spans 428 residues: Elongation factor 1-alpha (428 aa).

Residues 5–225 enclose the tr-type G domain; the sequence is KPILNVAFIG…DAFQPPEKPT (221 aa). The interval 14 to 21 is G1; the sequence is GHVDAGKS. 14–21 contacts GTP; the sequence is GHVDAGKS. A Mg(2+)-binding site is contributed by serine 21. Residues 70–74 are G2; that stretch reads GVTID. The tract at residues 91-94 is G3; the sequence is DCPG. GTP-binding positions include 91 to 95 and 149 to 152; these read DCPGH and NKMD. The G4 stretch occupies residues 149–152; sequence NKMD. Positions 189-191 are G5; the sequence is ASL.

This sequence belongs to the TRAFAC class translation factor GTPase superfamily. Classic translation factor GTPase family. EF-Tu/EF-1A subfamily.

It is found in the cytoplasm. The catalysed reaction is GTP + H2O = GDP + phosphate + H(+). Functionally, GTP hydrolase that promotes the GTP-dependent binding of aminoacyl-tRNA to the A-site of ribosomes during protein biosynthesis. The sequence is that of Elongation factor 1-alpha from Methanococcus maripaludis (strain C5 / ATCC BAA-1333).